A 137-amino-acid chain; its full sequence is MNEMKVGRYVVLTDRLYTETDEWVVLSNDNVAVIGITDYAQKKLRDIVGIELPQLQKEVKAGESVGVIESVKAAADIFSPLSGIIVEVNNKLLEHPEIINKDPYGEGWIFKLKASKLSEEKEKLLSPEKYIEKIKGG.

The Lipoyl-binding domain occupies 31-113 (VAVIGITDYA…YGEGWIFKLK (83 aa)). At Lys72 the chain carries N6-lipoyllysine.

This sequence belongs to the GcvH family. As to quaternary structure, the glycine cleavage system is composed of four proteins: P, T, L and H. It depends on (R)-lipoate as a cofactor.

In terms of biological role, the glycine cleavage system catalyzes the degradation of glycine. The H protein shuttles the methylamine group of glycine from the P protein to the T protein. This chain is Probable glycine cleavage system H protein 1, found in Saccharolobus solfataricus (strain ATCC 35092 / DSM 1617 / JCM 11322 / P2) (Sulfolobus solfataricus).